The chain runs to 296 residues: Light-independent protochlorophyllide reductase iron-sulfur ATP-binding protein (296 aa).

ATP contacts are provided by residues 39-44 (GIGKST) and K68. S43 serves as a coordination point for Mg(2+). [4Fe-4S] cluster is bound by residues C124 and C158. An ATP-binding site is contributed by 209 to 210 (NR).

The protein belongs to the NifH/BchL/ChlL family. Homodimer. Protochlorophyllide reductase is composed of three subunits; ChlL, ChlN and ChlB. It depends on [4Fe-4S] cluster as a cofactor.

It carries out the reaction chlorophyllide a + oxidized 2[4Fe-4S]-[ferredoxin] + 2 ADP + 2 phosphate = protochlorophyllide a + reduced 2[4Fe-4S]-[ferredoxin] + 2 ATP + 2 H2O. It functions in the pathway porphyrin-containing compound metabolism; chlorophyll biosynthesis (light-independent). In terms of biological role, component of the dark-operative protochlorophyllide reductase (DPOR) that uses Mg-ATP and reduced ferredoxin to reduce ring D of protochlorophyllide (Pchlide) to form chlorophyllide a (Chlide). This reaction is light-independent. The L component serves as a unique electron donor to the NB-component of the complex, and binds Mg-ATP. This chain is Light-independent protochlorophyllide reductase iron-sulfur ATP-binding protein, found in Prochlorococcus marinus (strain MIT 9313).